A 591-amino-acid polypeptide reads, in one-letter code: Acetyltransferase spyB (591 aa).

An N-linked (GlcNAc...) asparagine glycan is attached at asparagine 114. Transmembrane regions (helical) follow at residues 123 to 143 (GTII…LIFL), 168 to 188 (TLLY…ILIL), 199 to 219 (LWIF…ISHG), 228 to 248 (VGVQ…INPL), 309 to 329 (SAFL…LNCA), 383 to 403 (ASIL…PLFG), 453 to 473 (IFFV…LMGI), 481 to 501 (ILFF…QAAW), and 529 to 549 (LVGF…WLCP).

It belongs to the wax synthase family.

It is found in the membrane. The enzyme catalyses sartorypyrone F + acetyl-CoA = sartorypyrone G + CoA. It catalyses the reaction sartorypyrone D + acetyl-CoA = sartorypyrone A + CoA. The protein operates within secondary metabolite biosynthesis; terpenoid biosynthesis. In terms of biological role, acetyltransferase; part of the gene cluster that mediates the biosynthesis of meroterpenoids called sartorypyrones. SpyB catalyzes the last step of the pathway and is responsible for the acetylation of sartorypyrones D and F to produce sartorypyrones A and G, respectively. The biosynthesis of sartorypyrones begins with the production of triacetic acid lactone (TAL) by the NR-PKS spyA using one molecule of acetyl-CoA and two molecules of malonyl-CoA. The prenyltransferase spyF then conjugates geranylgeranyl pyrophosphate (GGPP) to TAL to form geranylgeranyl-triacetate lactone, for which the pathway-specific geranylgeranyl pyrophosphate synthase (GGPS) spyE is required to provide GGPP. Subsequently, geranylgeranyl-triacetate lactone is epoxidized at the terminal olein by the FAD-dependent monooxygenase spyC, followed by cyclization of the terpenoid component catalyzed by the terpene cyclase spyD to produce both the bicyclic sartorypyrone F and the monocyclic sartorypyrone D. Finally, the last step of the biosynthesis involves the acetylation of the meroterpenoids sartorypyrones D and F by the acetyltransferase SpyB to produce sartorypyrones A and G, respectively. This Aspergillus fumigatus (strain ATCC MYA-4609 / CBS 101355 / FGSC A1100 / Af293) (Neosartorya fumigata) protein is Acetyltransferase spyB.